Reading from the N-terminus, the 764-residue chain is MSTSCLNLIKKLSLAIEETNDEIINNMTQNGIKYDWLCIKNNVTYDFYYKSLKNRLQLVVEEYLMSSSKQMNFDSLSLSEIEPKQFELQFDVSQNINNFIRLIHSQDNNNFIDVFVHLLSKYKAKYGESLFPNEPIKTIDFIKNFYGKFNSELNSLNCTDCSSLKQTMCTCIIEKICGLYGLSINVSDQVNGIIPEDLHSVKILFTEIIKHYYENLHPIIWAQIILGILKDIFIELPTNREEFIKFIISRIIMNSGPLIFKIIQFIKPMLSVEIAKKYDLTRLSYPMLPEKSVEIIMKKIIINPETIDIIENYSASVGHVCKVIKLDDAENPFIIKIIKPLAVTQSCWEYKILHNLFPKNTCEHDFINAMLESNGREFNILNEVSNTNKGHDLYTDNYRNVFGLDINAVITTPKNISGVIKHDCWFAFAMELAPGISLQKLIDNNSFQTDTEYRAKLHRCLDLLVYKFFYNIVKNGFFHNDLHAGNIFFSHQLSQLTLIDFGSVSEINIFSSNTDSKSVLEIIIMSIFYNYDGILDVISGIINNKCPINQIIQSKNYDDFKKKLYDYRCNNIKNSPIDNINQKIITDNIFGFNRISTEKDLFIDNHSKGTISDSIYRHIDKQYFDKEIDIINEPKKSRELEYPKKIIIENKDILSMSNENMDSNTNITFTFVLDLIMKFYSEHNINIAVRFIEFYNLQRAYCLLLGVLHKSNYSSYRLYHIISKSIMNWSNFQSLFNVKNTYYLLTVYQREKTVYNKLLKQLID.

This is an uncharacterized protein from Acanthamoeba polyphaga (Amoeba).